The primary structure comprises 140 residues: Organic hydroperoxide resistance protein-like (140 aa).

Belongs to the OsmC/Ohr family.

This is Organic hydroperoxide resistance protein-like from Mycoplasma genitalium (strain ATCC 33530 / DSM 19775 / NCTC 10195 / G37) (Mycoplasmoides genitalium).